A 232-amino-acid polypeptide reads, in one-letter code: Large ribosomal subunit protein uL1 (232 aa).

This sequence belongs to the universal ribosomal protein uL1 family. Part of the 50S ribosomal subunit.

Binds directly to 23S rRNA. The L1 stalk is quite mobile in the ribosome, and is involved in E site tRNA release. Its function is as follows. Protein L1 is also a translational repressor protein, it controls the translation of the L11 operon by binding to its mRNA. In Bartonella henselae (strain ATCC 49882 / DSM 28221 / CCUG 30454 / Houston 1) (Rochalimaea henselae), this protein is Large ribosomal subunit protein uL1.